The following is a 423-amino-acid chain: CinA-like protein (423 aa).

It belongs to the CinA family.

The polypeptide is CinA-like protein (Chlorobaculum tepidum (strain ATCC 49652 / DSM 12025 / NBRC 103806 / TLS) (Chlorobium tepidum)).